The chain runs to 339 residues: Dihydroorotate dehydrogenase (quinone) (339 aa).

Residues 62 to 66 (AGMDK) and threonine 86 contribute to the FMN site. Substrate is bound at residue lysine 66. Residue 111–115 (NRMGF) coordinates substrate. FMN-binding residues include asparagine 139 and asparagine 172. Asparagine 172 provides a ligand contact to substrate. Serine 175 (nucleophile) is an active-site residue. Substrate is bound at residue asparagine 177. 2 residues coordinate FMN: lysine 217 and threonine 245. 246-247 (NT) serves as a coordination point for substrate. Residues glycine 268, glycine 297, and 318–319 (YS) contribute to the FMN site.

The protein belongs to the dihydroorotate dehydrogenase family. Type 2 subfamily. As to quaternary structure, monomer. Requires FMN as cofactor.

The protein localises to the cell membrane. It carries out the reaction (S)-dihydroorotate + a quinone = orotate + a quinol. The protein operates within pyrimidine metabolism; UMP biosynthesis via de novo pathway; orotate from (S)-dihydroorotate (quinone route): step 1/1. Catalyzes the conversion of dihydroorotate to orotate with quinone as electron acceptor. The chain is Dihydroorotate dehydrogenase (quinone) from Shewanella baltica (strain OS155 / ATCC BAA-1091).